The sequence spans 221 residues: Ubiquitin-conjugating enzyme E2 S (221 aa).

In terms of domain architecture, UBC core spans 11-157 (QVLRLVYKEV…AHLLTEIHAM (147 aa)). Catalysis depends on C95, which acts as the Glycyl thioester intermediate. The segment at 158–221 (GGTSGAPQEP…TDKKRALRRL (64 aa)) is disordered. Positions 193-206 (GTGTNNSNISNTNI) are enriched in low complexity. Over residues 208–221 (AKKKTDKKRALRRL) the composition is skewed to basic residues.

The protein belongs to the ubiquitin-conjugating enzyme family.

The enzyme catalyses S-ubiquitinyl-[E1 ubiquitin-activating enzyme]-L-cysteine + [E2 ubiquitin-conjugating enzyme]-L-cysteine = [E1 ubiquitin-activating enzyme]-L-cysteine + S-ubiquitinyl-[E2 ubiquitin-conjugating enzyme]-L-cysteine.. The protein operates within protein modification; protein ubiquitination. In terms of biological role, catalyzes the covalent attachment of ubiquitin to other proteins. Acts as an essential factor of the anaphase promoting complex/cyclosome (APC/C), a cell cycle-regulated ubiquitin ligase that controls progression through mitosis. Acts by specifically elongating 'Lys-11'-linked polyubiquitin chains initiated by the E2 enzyme ube2c/ubch10 on APC/C substrates, enhancing the degradation of APC/C substrates by the proteasome and promoting mitotic exit. The sequence is that of Ubiquitin-conjugating enzyme E2 S (ube2s) from Danio rerio (Zebrafish).